Reading from the N-terminus, the 148-residue chain is Aspartate carbamoyltransferase regulatory chain (148 aa).

Zn(2+) contacts are provided by Cys106, Cys111, Cys134, and Cys137.

It belongs to the PyrI family. Contains catalytic and regulatory chains. The cofactor is Zn(2+).

Functionally, involved in allosteric regulation of aspartate carbamoyltransferase. In Methanococcus maripaludis (strain DSM 14266 / JCM 13030 / NBRC 101832 / S2 / LL), this protein is Aspartate carbamoyltransferase regulatory chain.